The chain runs to 355 residues: Ataxin-3 (355 aa).

M1 participates in a covalent cross-link: Peptide (Met-Gly) (interchain with G-Cter in ubiquitin). A Josephin domain is found at 1-180 (MESIFHEKQE…DCEADQLLQM (180 aa)). Residue C14 is the Nucleophile of the active site. The Proton acceptor role is filled by H119. N134 is an active-site residue. A Glycyl lysine isopeptide (Lys-Gly) (interchain with G-Cter in ubiquitin) cross-link involves residue K200. S219 carries the phosphoserine modification. 2 UIM domains span residues 224–243 (EDEDDLQRALAISRQEIDME) and 244–263 (DEEADLRRAIQLSMQGSSRS). A compositionally biased stretch (polar residues) spans 257–275 (MQGSSRSMCENSPQTSSPD). Residues 257–355 (MQGSSRSMCE…KDNLKAERKK (99 aa)) form a disordered region. Phosphoserine occurs at positions 268, 272, and 273. Positions 279 to 289 (EELRRRREAYF) are enriched in basic and acidic residues. The residue at position 321 (S321) is a Phosphoserine. Residues 329–348 (SEEDMLRAAVTMSLETAKDN) enclose the UIM 3 domain. Basic and acidic residues predominate over residues 344–355 (TAKDNLKAERKK).

Interacts with STUB1/CHIP (when monoubiquitinated). Interacts with DNA repair proteins RAD23A and RAD23B. Interacts with BECN1 (via its poly-Gln domain). Interacts with PRKN, UBR2, VCP and tubulin. Post-translationally, monoubiquitinated by UBE2W, possibly leading to activate the deubiquitinating enzyme activity.

It is found in the nucleus matrix. The protein resides in the nucleus. The protein localises to the lysosome membrane. It carries out the reaction Thiol-dependent hydrolysis of ester, thioester, amide, peptide and isopeptide bonds formed by the C-terminal Gly of ubiquitin (a 76-residue protein attached to proteins as an intracellular targeting signal).. Functionally, deubiquitinating enzyme involved in protein homeostasis maintenance, transcription, cytoskeleton regulation, myogenesis and degradation of misfolded chaperone substrates. Binds long polyubiquitin chains and trims them, while it has weak or no activity against chains of 4 or less ubiquitins. Involved in degradation of misfolded chaperone substrates via its interaction with STUB1/CHIP: recruited to monoubiquitinated STUB1/CHIP, and restricts the length of ubiquitin chain attached to STUB1/CHIP substrates and preventing further chain extension. Interacts with key regulators of transcription and represses transcription: acts as a histone-binding protein that regulates transcription. Acts as a negative regulator of mTORC1 signaling in response to amino acid deprivation by mediating deubiquitination of RHEB, thereby promoting RHEB inactivation by the TSC-TBC complex. Regulates autophagy via the deubiquitination of 'Lys-402' of BECN1 leading to the stabilization of BECN1. In Mus musculus (Mouse), this protein is Ataxin-3 (Atxn3).